The sequence spans 173 residues: Disulfide bond formation protein B 2 (173 aa).

Residues 1–9 (MSLAGSRLL) are Cytoplasmic-facing. Residues 10–26 (FSLVFLVGALASWAAFN) form a helical membrane-spanning segment. At 27-44 (LQTGGGLESCSLWSVQRL) the chain is on the periplasmic side. Residues 45-61 (LLLALGGVNLLAVIQGP) form a helical membrane-spanning segment. The Cytoplasmic segment spans residues 62–67 (GRVGRA). Residues 68–85 (VYWGLNLLLGLLGVVTAG) traverse the membrane as a helical segment. Residues 86–142 (RHVLLQNIPSEQLLACLPDMSFMLRQLSWWQALKLTFMGTSDCAEVTWTLLDMSLPE) lie on the Periplasmic side of the membrane. A disulfide bridge connects residues Cys-101 and Cys-128. A helical transmembrane segment spans residues 143-161 (WSLLFFVIMLIFSGYRLWR). The Cytoplasmic segment spans residues 162 to 173 (QLRGARKAVALP).

The protein belongs to the DsbB family.

The protein localises to the cell inner membrane. Its function is as follows. Required for disulfide bond formation in some periplasmic proteins. Acts by oxidizing the DsbA protein. The chain is Disulfide bond formation protein B 2 from Pseudomonas fluorescens (strain ATCC BAA-477 / NRRL B-23932 / Pf-5).